A 268-amino-acid polypeptide reads, in one-letter code: 3-methyl-2-oxobutanoate hydroxymethyltransferase (268 aa).

Mg(2+) contacts are provided by Asp41 and Asp80. Residues 41 to 42 (DS), Asp80, and Lys110 each bind 3-methyl-2-oxobutanoate. Glu112 contacts Mg(2+). The active-site Proton acceptor is the Glu178.

This sequence belongs to the PanB family. In terms of assembly, homodecamer; pentamer of dimers. It depends on Mg(2+) as a cofactor.

It localises to the cytoplasm. It catalyses the reaction 3-methyl-2-oxobutanoate + (6R)-5,10-methylene-5,6,7,8-tetrahydrofolate + H2O = 2-dehydropantoate + (6S)-5,6,7,8-tetrahydrofolate. Its pathway is cofactor biosynthesis; coenzyme A biosynthesis. Catalyzes the reversible reaction in which hydroxymethyl group from 5,10-methylenetetrahydrofolate is transferred onto alpha-ketoisovalerate to form ketopantoate. This is 3-methyl-2-oxobutanoate hydroxymethyltransferase from Natronomonas pharaonis (strain ATCC 35678 / DSM 2160 / CIP 103997 / JCM 8858 / NBRC 14720 / NCIMB 2260 / Gabara) (Halobacterium pharaonis).